The chain runs to 439 residues: Serine/threonine-protein kinase 2 (439 aa).

Residues 87-439 (NDDFYHISTG…IFSDWINGGN (353 aa)) enclose the Protein kinase domain. ATP-binding positions include 93 to 101 (ISTGGYGIV) and lysine 117. Residue aspartate 307 is the Proton acceptor of the active site.

The protein belongs to the protein kinase superfamily. Ser/Thr protein kinase family. In terms of processing, phosphorylated in vivo. Autophosphorylated in vitro.

It is found in the host endoplasmic reticulum. The protein localises to the host endoplasmic reticulum-Golgi intermediate compartment. The catalysed reaction is L-seryl-[protein] + ATP = O-phospho-L-seryl-[protein] + ADP + H(+). It carries out the reaction L-threonyl-[protein] + ATP = O-phospho-L-threonyl-[protein] + ADP + H(+). Its function is as follows. Essential serine-protein kinase involved in the early stage of virion morphogenesis. This Vaccinia virus (strain Tian Tan) (VACV) protein is Serine/threonine-protein kinase 2 (OPG054).